Here is a 644-residue protein sequence, read N- to C-terminus: 3D-(3,5/4)-trihydroxycyclohexane-1,2-dione hydrolase (644 aa).

A thiamine diphosphate-binding site is contributed by glutamate 65. A thiamine pyrophosphate binding region spans residues 442–522 (SLPGDLHKVW…INILLFDNAG (81 aa)). 2 residues coordinate Mg(2+): aspartate 493 and asparagine 520.

It belongs to the TPP enzyme family. Mg(2+) serves as cofactor. The cofactor is thiamine diphosphate.

The catalysed reaction is 3D-3,5/4-trihydroxycyclohexane-1,2-dione + H2O = 5-deoxy-D-glucuronate + H(+). The protein operates within polyol metabolism; myo-inositol degradation into acetyl-CoA; acetyl-CoA from myo-inositol: step 3/7. In terms of biological role, involved in the cleavage of the C1-C2 bond of 3D-(3,5/4)-trihydroxycyclohexane-1,2-dione (THcHDO) to yield 5-deoxy-glucuronate (5DG). This is 3D-(3,5/4)-trihydroxycyclohexane-1,2-dione hydrolase from Clostridium tetani (strain Massachusetts / E88).